The sequence spans 210 residues: Protein-L-isoaspartate O-methyltransferase (210 aa).

Serine 59 is an active-site residue.

This sequence belongs to the methyltransferase superfamily. L-isoaspartyl/D-aspartyl protein methyltransferase family.

It is found in the cytoplasm. The enzyme catalyses [protein]-L-isoaspartate + S-adenosyl-L-methionine = [protein]-L-isoaspartate alpha-methyl ester + S-adenosyl-L-homocysteine. Its function is as follows. Catalyzes the methyl esterification of L-isoaspartyl residues in peptides and proteins that result from spontaneous decomposition of normal L-aspartyl and L-asparaginyl residues. It plays a role in the repair and/or degradation of damaged proteins. The sequence is that of Protein-L-isoaspartate O-methyltransferase from Nitratidesulfovibrio vulgaris (strain ATCC 29579 / DSM 644 / CCUG 34227 / NCIMB 8303 / VKM B-1760 / Hildenborough) (Desulfovibrio vulgaris).